The following is a 291-amino-acid chain: tRNA dimethylallyltransferase (291 aa).

11-18 is an ATP binding site; sequence GPTASGKS. Residue 13-18 participates in substrate binding; sequence TASGKS. The tract at residues 42–45 is interaction with substrate tRNA; the sequence is DSMQ.

This sequence belongs to the IPP transferase family. As to quaternary structure, monomer. Mg(2+) serves as cofactor.

It carries out the reaction adenosine(37) in tRNA + dimethylallyl diphosphate = N(6)-dimethylallyladenosine(37) in tRNA + diphosphate. Catalyzes the transfer of a dimethylallyl group onto the adenine at position 37 in tRNAs that read codons beginning with uridine, leading to the formation of N6-(dimethylallyl)adenosine (i(6)A). This chain is tRNA dimethylallyltransferase, found in Rubrobacter xylanophilus (strain DSM 9941 / JCM 11954 / NBRC 16129 / PRD-1).